Reading from the N-terminus, the 771-residue chain is MFSLKPPRPSFRSYLLPPAQTDDKISSEPKIKKLEPVLLPGEIVVNEVNFVRKCIATDTSQYDLWGKLICSNFKISFITDDPMPLQKFHYRNLLLGEHDVPLTCIEQIVTVNDHKRKQKVLGPNQKLKFNPTELIIYCKDFRIVRFRFDESGPESAKKVCLAIAHYSQPTDLQLLFAFEYVGKKYHNSANKVNGVSSGGGGVWSGAGSTGSQRTPLFETYSDWDRETKRTGASGWRVCSINEGYMISTCLPEYFVVPSSLADQDLKIFSHSFVGRRMPFWCWSHSNGSALVRMALIKDALQQRKIDQRICNAITKSHPQRSDVYKSDLDKALPNIQEIQAAFVKLKQLCVNEPFEETEEKWLSSLESTRWLEYVRAFLKHSAELVYILESQRLSVVLQEEEGRDLSCLVASLIQVMMDPYFRTITGFQSLIQKEWVMAGYQFLDRCNHLKRSEKESPLFLLFLDTTWQLLEQYPAAFEFSETYLAVLCDSTRISLFGTFLFNSPHQRVKQSTEFAISKNIQLGDEKGLKFPSVWDWALQFTAKDRTLFHNPFYIGKSTPCVQNGSRKSFKRTKKSYSSTLRGMPSCLKNGIITDQDLLPRRNSLVLKLKPDPPQHTDSQHSGAEQYFKEWFSRPANLHGIILPRLSGTHIKLWKLCYFRWVPEAQINLGGSIMAFHKLSLLADEVDMLSRMLRQHRSGPLEACYAELDQSRMYFRATGPHDTLGTPEFLSSSFPFSPVGNLCRRSILGTPLSKFLSGAKIWLSTETLANED.

The Myotubularin phosphatase domain maps to 217–657 (FETYSDWDRE…THIKLWKLCY (441 aa)). Residues serine 603 and serine 745 each carry the phosphoserine modification.

Belongs to the protein-tyrosine phosphatase family. Non-receptor class myotubularin subfamily.

The chain is Myotubularin-related protein 10 (Mtmr10) from Mus musculus (Mouse).